A 373-amino-acid chain; its full sequence is GDP-mannose 4,6-dehydratase (373 aa).

Residues 10-15, 65-66, 87-91, and Y102 contribute to the NADP(+) site; these read GITGQD, DL, and LGAQS. T134 is an active-site residue. Active-site nucleophile residues include E136 and Y158. The NADP(+) site is built by K162, H188, and R193.

It belongs to the NAD(P)-dependent epimerase/dehydratase family. GDP-mannose 4,6-dehydratase subfamily. Requires NADP(+) as cofactor.

It carries out the reaction GDP-alpha-D-mannose = GDP-4-dehydro-alpha-D-rhamnose + H2O. Its function is as follows. Catalyzes the conversion of GDP-D-mannose to GDP-4-dehydro-6-deoxy-D-mannose. This chain is GDP-mannose 4,6-dehydratase, found in Vibrio cholerae serotype O1 (strain ATCC 39315 / El Tor Inaba N16961).